Consider the following 259-residue polypeptide: Trypsin (259 aa).

Residues 1-32 (MKHFLRALKRCSVAVATVAIAVVGLQPVTASA) form the signal peptide. The propeptide at 33 to 36 (APNP) is activation peptide. The region spanning 37–257 (VVGGTRAAQG…FASAIASAAR (221 aa)) is the Peptidase S1 domain. Cysteine 58 and cysteine 74 are oxidised to a cystine. Active-site charge relay system residues include histidine 73 and aspartate 118. Disulfide bonds link cysteine 177–cysteine 192 and cysteine 204–cysteine 233. The Charge relay system role is filled by serine 208.

It belongs to the peptidase S1 family.

It carries out the reaction Preferential cleavage: Arg-|-Xaa, Lys-|-Xaa.. This Streptomyces griseus protein is Trypsin (sprT).